The following is a 140-amino-acid chain: Arsenate-mycothiol transferase ArsC1 (140 aa).

The protein belongs to the low molecular weight phosphotyrosine protein phosphatase family.

The protein resides in the cytoplasm. It catalyses the reaction mycothiol + arsenate = arseno-mycothiol + H2O. Functionally, involved in defense against toxic arsenate. Involved in the mycothiol/myoredoxin redox pathway which uses a mycothioltransferase mechanism; facilitates adduct formation between arsenate and mycothiol. This Corynebacterium glutamicum (strain ATCC 13032 / K051) protein is Arsenate-mycothiol transferase ArsC1 (arsC1).